Consider the following 138-residue polypeptide: ATP synthase epsilon chain (138 aa).

The protein belongs to the ATPase epsilon chain family. As to quaternary structure, F-type ATPases have 2 components, CF(1) - the catalytic core - and CF(0) - the membrane proton channel. CF(1) has five subunits: alpha(3), beta(3), gamma(1), delta(1), epsilon(1). CF(0) has three main subunits: a, b and c.

The protein localises to the cell inner membrane. Its function is as follows. Produces ATP from ADP in the presence of a proton gradient across the membrane. The sequence is that of ATP synthase epsilon chain from Cupriavidus necator (strain ATCC 17699 / DSM 428 / KCTC 22496 / NCIMB 10442 / H16 / Stanier 337) (Ralstonia eutropha).